A 273-amino-acid polypeptide reads, in one-letter code: Polyamine aminopropyltransferase (273 aa).

Positions 5 to 238 (ENWFSERYSD…GFWSFTVASP (234 aa)) constitute a PABS domain. Gln34 provides a ligand contact to S-methyl-5'-thioadenosine. The spermidine site is built by His65 and Asp90. S-methyl-5'-thioadenosine is bound by residues Glu109 and 140-141 (DG). The Proton acceptor role is filled by Asp158. Residue 158–161 (DSTD) coordinates spermidine. Pro165 serves as a coordination point for S-methyl-5'-thioadenosine.

It belongs to the spermidine/spermine synthase family. As to quaternary structure, homodimer or homotetramer.

It localises to the cytoplasm. It catalyses the reaction S-adenosyl 3-(methylsulfanyl)propylamine + putrescine = S-methyl-5'-thioadenosine + spermidine + H(+). It functions in the pathway amine and polyamine biosynthesis; spermidine biosynthesis; spermidine from putrescine: step 1/1. Catalyzes the irreversible transfer of a propylamine group from the amino donor S-adenosylmethioninamine (decarboxy-AdoMet) to putrescine (1,4-diaminobutane) to yield spermidine. This chain is Polyamine aminopropyltransferase, found in Thermoplasma acidophilum (strain ATCC 25905 / DSM 1728 / JCM 9062 / NBRC 15155 / AMRC-C165).